The following is a 289-amino-acid chain: tRNA dimethylallyltransferase (289 aa).

9 to 16 (GTTASGKT) is a binding site for ATP. Position 11-16 (11-16 (TASGKT)) interacts with substrate. Residues 34-37 (DSLC) form an interaction with substrate tRNA region.

Belongs to the IPP transferase family. As to quaternary structure, monomer. The cofactor is Mg(2+).

The enzyme catalyses adenosine(37) in tRNA + dimethylallyl diphosphate = N(6)-dimethylallyladenosine(37) in tRNA + diphosphate. Its function is as follows. Catalyzes the transfer of a dimethylallyl group onto the adenine at position 37 in tRNAs that read codons beginning with uridine, leading to the formation of N6-(dimethylallyl)adenosine (i(6)A). This is tRNA dimethylallyltransferase from Campylobacter jejuni (strain RM1221).